The primary structure comprises 388 residues: Phosphoglycerate kinase (388 aa).

Substrate is bound by residues 21 to 23 (DLN), arginine 36, 59 to 62 (HLGR), arginine 114, and arginine 147. ATP contacts are provided by residues lysine 198, glutamate 315, and 341-344 (GGDT).

This sequence belongs to the phosphoglycerate kinase family. As to quaternary structure, monomer.

It is found in the cytoplasm. It carries out the reaction (2R)-3-phosphoglycerate + ATP = (2R)-3-phospho-glyceroyl phosphate + ADP. Its pathway is carbohydrate degradation; glycolysis; pyruvate from D-glyceraldehyde 3-phosphate: step 2/5. This chain is Phosphoglycerate kinase, found in Hahella chejuensis (strain KCTC 2396).